The chain runs to 193 residues: Probable GTP-binding protein EngB (193 aa).

An EngB-type G domain is found at 19 to 188; sequence SVKEVCFMGR…HKQIFELFKA (170 aa). GTP-binding positions include 27-34, 53-57, 70-73, 136-139, and 167-169; these read GRSNVGKS, GRTQL, DLPG, NKFD, and VSA. Mg(2+) is bound by residues serine 34 and threonine 55.

Belongs to the TRAFAC class TrmE-Era-EngA-EngB-Septin-like GTPase superfamily. EngB GTPase family. Mg(2+) serves as cofactor.

In terms of biological role, necessary for normal cell division and for the maintenance of normal septation. This Mycoplasma pneumoniae (strain ATCC 29342 / M129 / Subtype 1) (Mycoplasmoides pneumoniae) protein is Probable GTP-binding protein EngB.